Consider the following 121-residue polypeptide: HTH-type transcriptional regulator Rv1152 (121 aa).

Residues 15–83 (KPLFDQLRTQ…GRFGTFISRF (69 aa)) form the HTH gntR-type domain. Residues 43–62 (VRDLAGQLGVAANTVARAYR) constitute a DNA-binding region (H-T-H motif).

The protein localises to the cytoplasm. The protein resides in the secreted. Its subcellular location is the cell wall. Functionally, transcriptional regulator that modulates resistance to vancomycin and aminoglycosides. Negatively regulates the expression of several genes responsive to vancomycin, resulting in decreased susceptibility of bacteria to vancomycin. Negatively regulates the expression of genes encoding the ribosome binding protein Hsp, the small subunit of sulfate adenylyltransferase CysD, the L-lysine-epsilon aminotransferase LAT and the protease HtpX. Also modulates purine metabolism and aminoglycoside antibiotic resistance. Negatively regulates the expression of purine metabolism-related genes and the accumulation of purine metabolites, which affects aminoglycoside antibiotic resistance. This is HTH-type transcriptional regulator Rv1152 from Mycobacterium tuberculosis (strain ATCC 25618 / H37Rv).